Consider the following 75-residue polypeptide: UPF0270 protein PSEEN1465 (75 aa).

It belongs to the UPF0270 family.

The sequence is that of UPF0270 protein PSEEN1465 from Pseudomonas entomophila (strain L48).